Here is a 379-residue protein sequence, read N- to C-terminus: Inactive 2'-5'-oligoadenylate synthase 1B (379 aa).

At 1 to 355 (MEQELRSIPA…VPTEVDIPSQ (355 aa)) the chain is on the cytoplasmic side. Residues 356–374 (NYFFHIICLIFWLLLRLIF) form a helical; Anchor for type IV membrane protein membrane-spanning segment. Topologically, residues 375–379 (GKHSV) are extracellular.

Belongs to the 2-5A synthase family. Interacts with OSBPL1A and ABCF3. In terms of tissue distribution, highly expressed in the brain, liver, spleen and heart.

Its subcellular location is the endoplasmic reticulum membrane. Functionally, does not have 2'-5'-OAS activity, but can bind double-stranded RNA. Displays antiviral activity against viruses via an alternative antiviral pathway independent of RNase L. The chain is Inactive 2'-5'-oligoadenylate synthase 1B (Oas1b) from Rattus norvegicus (Rat).